Here is a 347-residue protein sequence, read N- to C-terminus: Quinolinate synthase (347 aa).

Iminosuccinate-binding residues include His-47 and Ser-68. Cys-113 contributes to the [4Fe-4S] cluster binding site. Iminosuccinate-binding positions include 139–141 (YAN) and Ser-156. Cys-200 contacts [4Fe-4S] cluster. Residues 226-228 (HPE) and Thr-243 each bind iminosuccinate. A [4Fe-4S] cluster-binding site is contributed by Cys-297.

The protein belongs to the quinolinate synthase family. Type 1 subfamily. [4Fe-4S] cluster serves as cofactor.

Its subcellular location is the cytoplasm. It catalyses the reaction iminosuccinate + dihydroxyacetone phosphate = quinolinate + phosphate + 2 H2O + H(+). It participates in cofactor biosynthesis; NAD(+) biosynthesis; quinolinate from iminoaspartate: step 1/1. Catalyzes the condensation of iminoaspartate with dihydroxyacetone phosphate to form quinolinate. This chain is Quinolinate synthase, found in Salmonella typhi.